Consider the following 651-residue polypeptide: Choline transporter-like protein 1 (651 aa).

Over 1–25 (MGCCGSTQNSKRDWRPLEEHSCTDI) the chain is Cytoplasmic. The helical transmembrane segment at 26–46 (PWLLLFILFCVGMGFICGFSI) threads the bilayer. The Extracellular portion of the chain corresponds to 47–208 (ATGAASRLVF…RLISGVMTSK (162 aa)). Residues asparagine 131 and asparagine 176 are each glycosylated (N-linked (GlcNAc...) asparagine). A helical transmembrane segment spans residues 209-229 (EIIMGLCLLSLVLSMILMVII). Residues 230–234 (RYISR) lie on the Cytoplasmic side of the membrane. Residues 235-255 (VLVWIITILVVLGSLGGTGVL) traverse the membrane as a helical segment. Topologically, residues 256–284 (WWLYADNKKSLNENLPPDQLQVSKDNLQA) are extracellular. Residues 285 to 305 (LLVYAIAATVFTVILLLMMLI) form a helical membrane-spanning segment. Residues 306–311 (MRKRVA) lie on the Cytoplasmic side of the membrane. The helical transmembrane segment at 312-332 (LTIALFNVAGKVFIHLPLLVF) threads the bilayer. Over 333–334 (QP) the chain is Extracellular. The chain crosses the membrane as a helical span at residues 335-355 (FWTFFALLLFWVYWVMVLLFL). Topologically, residues 356 to 376 (GTAGDPFTNEQGFVEFRINGP) are cytoplasmic. Residues 377–397 (LQYMWWYHLVGLIWISEFILA) form a helical membrane-spanning segment. Residues 398 to 438 (CQQMTIAGAVVTYYFTRNKNDLPFTPILASVNRLIRYHLGT) lie on the Extracellular side of the membrane. Residues 439 to 459 (VAKGAFIITLVKIPRMILMYI) traverse the membrane as a helical segment. The Cytoplasmic segment spans residues 460-533 (HSQLKGKENA…RVAAINTVGD (74 aa)). A helical transmembrane segment spans residues 534–554 (FMLFLGKILIVSCTGLAGIML). The Extracellular segment spans residues 555-562 (LNYQRDYT). A helical membrane pass occupies residues 563–583 (VWVLPLIIVCLFAFLVAHCFL). The Cytoplasmic portion of the chain corresponds to 584–651 (SIYEMVVDVL…KPMASGTSTA (68 aa)). Residues 629-651 (LKEPGSTAEGRELKPMASGTSTA) are disordered.

This sequence belongs to the CTL (choline transporter-like) family.

It is found in the cell membrane. The protein resides in the mitochondrion outer membrane. It carries out the reaction choline(out) + n H(+)(in) = choline(in) + n H(+)(out). It catalyses the reaction ethanolamine(out) + n H(+)(in) = ethanolamine(in) + n H(+)(out). In terms of biological role, choline/H+ antiporter. Also acts as a high-affinity ethanolamine/H+ antiporter, regulating the supply of extracellular ethanolamine (Etn) for the CDP-Etn pathway, redistribute intracellular Etn and balance the CDP-Cho and CDP-Etn arms of the Kennedy pathway. Involved in membrane synthesis and myelin production. This chain is Choline transporter-like protein 1 (slc44a1), found in Xenopus laevis (African clawed frog).